The primary structure comprises 138 residues: MSARRTSREIAVMALYQLELTQPPLKEVLKFKWYDKKTEPEERDFAVSIVNGVVKNQEQIDTLIKKYSKNWDFSRISIVNKAILRLSIYALLYTWEVPKNVTIDEAVELTKEFESEESARFVNGVLDAILKNEIKSDG.

The protein belongs to the NusB family.

In terms of biological role, involved in transcription antitermination. Required for transcription of ribosomal RNA (rRNA) genes. Binds specifically to the boxA antiterminator sequence of the ribosomal RNA (rrn) operons. In Leptospira interrogans serogroup Icterohaemorrhagiae serovar copenhageni (strain Fiocruz L1-130), this protein is Transcription antitermination protein NusB.